Here is a 199-residue protein sequence, read N- to C-terminus: Probable molybdenum cofactor guanylyltransferase (199 aa).

GTP contacts are provided by residues 8–10, Lys20, Asp65, and Asp96; that span reads LAG. Asp96 is a binding site for Mg(2+).

It belongs to the MobA family. Mg(2+) is required as a cofactor.

It localises to the cytoplasm. It carries out the reaction Mo-molybdopterin + GTP + H(+) = Mo-molybdopterin guanine dinucleotide + diphosphate. In terms of biological role, transfers a GMP moiety from GTP to Mo-molybdopterin (Mo-MPT) cofactor (Moco or molybdenum cofactor) to form Mo-molybdopterin guanine dinucleotide (Mo-MGD) cofactor. This is Probable molybdenum cofactor guanylyltransferase from Bacillus subtilis (strain 168).